The primary structure comprises 702 residues: DnaJ homolog subfamily C member 14 (702 aa).

2 disordered regions span residues 1–148 (MAQK…GGNG) and 165–229 (DELE…KRSQ). The span at 75–84 (HGPPGGPGPP) shows a compositional bias: pro residues. Acidic residues predominate over residues 88–103 (EDPDQSETSSEEESGV). Residues 113 to 133 (TGNQKDGNSFLSIPSACNCQG) are compositionally biased toward polar residues. Residues 165–175 (DELEEEYDDEE) show a composition bias toward acidic residues. Positions 192–201 (PPSRRQRHRF) are enriched in basic residues. Over residues 202-217 (PTKEDTREGGRRDPRS) the composition is skewed to basic and acidic residues. The segment covering 218–227 (PGRHRLGRKR) has biased composition (basic residues). 3 consecutive transmembrane segments (helical) span residues 250 to 270 (AGFW…ETCG), 300 to 320 (GWAQ…VGLF), and 326 to 346 (LLGA…QLGW). One can recognise a J domain in the interval 443 to 507 (NPFHVLGVEA…EKRKEYEMKR (65 aa)). The tract at residues 658 to 702 (MPNGNFFAAPQPAPGAAAASKPNSTVPKGEAKPKRRKKVRRPFQR) is disordered. A compositionally biased stretch (low complexity) spans 659 to 676 (PNGNFFAAPQPAPGAAAA). The span at 690 to 702 (PKRRKKVRRPFQR) shows a compositional bias: basic residues.

As to quaternary structure, interacts with the FxxxFxxxF motif of DRD1 via its C-terminal domain. As to expression, highly expressed in pancreas and selectively expressed in brain, lung, liver, skeletal muscle and kidney.

Its subcellular location is the endoplasmic reticulum membrane. Its function is as follows. Regulates the export of target proteins, such as DRD1, from the endoplasmic reticulum to the cell surface. In Homo sapiens (Human), this protein is DnaJ homolog subfamily C member 14 (DNAJC14).